The chain runs to 757 residues: Cellulose synthase-like protein B2 (757 aa).

Transmembrane regions (helical) follow at residues 24 to 44 (AVDL…ILYM) and 48 to 68 (GIIW…WLLS). Catalysis depends on residues Asp-136 and Asp-461. The next 6 helical transmembrane spans lie at 533 to 555 (AYLC…LPAY), 568 to 588 (LCLG…LWEF), 607 to 627 (IVAT…LLGL), 672 to 692 (FLPG…VFVG), 704 to 724 (GSGL…FPFL), and 735 to 755 (IPLS…VFSV).

The protein belongs to the glycosyltransferase 2 family. Plant cellulose synthase-like B subfamily. As to expression, expressed in young seedlings, primarily in the root vascular tissue.

It localises to the golgi apparatus membrane. Thought to be a Golgi-localized beta-glycan synthase that polymerize the backbones of noncellulosic polysaccharides (hemicelluloses) of plant cell wall. The polypeptide is Cellulose synthase-like protein B2 (CSLB2) (Arabidopsis thaliana (Mouse-ear cress)).